Reading from the N-terminus, the 155-residue chain is MAVPGVNKDNIRAGCKKCGYPGHLTFECRNFLRVDPQRDIVLDVSSTSTEDSEDESEEVARAPADKKNVTDTGKKKLKRKKEKKLKKHRKRLHSSSESDDNSKAKKRKSQKKEKRVKHKAKKGKQHKKDKRKEKRERKSSSSSSSSSSSQSSSSD.

The CCHC-type zinc-finger motif lies at Ala-13–Asn-30. The disordered stretch occupies residues Asp-43–Asp-155. A compositionally biased stretch (basic and acidic residues) spans Glu-58–Lys-74. The segment covering Lys-75 to His-93 has biased composition (basic residues). Positions Ser-94–Lys-103 are enriched in basic and acidic residues. The segment covering Ala-104–Arg-137 has biased composition (basic residues). Over residues Ser-140–Asp-155 the composition is skewed to low complexity.

Possible splicing regulator involved in the control of cellular survival. This is Protein SREK1IP1 (srek1ip1) from Xenopus tropicalis (Western clawed frog).